Reading from the N-terminus, the 189-residue chain is Probable nicotinate-nucleotide adenylyltransferase (189 aa).

Belongs to the NadD family.

The catalysed reaction is nicotinate beta-D-ribonucleotide + ATP + H(+) = deamido-NAD(+) + diphosphate. It participates in cofactor biosynthesis; NAD(+) biosynthesis; deamido-NAD(+) from nicotinate D-ribonucleotide: step 1/1. Functionally, catalyzes the reversible adenylation of nicotinate mononucleotide (NaMN) to nicotinic acid adenine dinucleotide (NaAD). The polypeptide is Probable nicotinate-nucleotide adenylyltransferase (Bacillus mycoides (strain KBAB4) (Bacillus weihenstephanensis)).